We begin with the raw amino-acid sequence, 120 residues long: Large ribosomal subunit protein uL18 (120 aa).

The protein belongs to the universal ribosomal protein uL18 family. Part of the 50S ribosomal subunit; part of the 5S rRNA/L5/L18/L25 subcomplex. Contacts the 5S and 23S rRNAs.

In terms of biological role, this is one of the proteins that bind and probably mediate the attachment of the 5S RNA into the large ribosomal subunit, where it forms part of the central protuberance. This is Large ribosomal subunit protein uL18 from Rhizobium meliloti (strain 1021) (Ensifer meliloti).